A 444-amino-acid chain; its full sequence is Phosphoribosylamine--glycine ligase (444 aa).

The ATP-grasp domain occupies 109-324; sequence RNLFKKYEID…FLDVCFAIAE (216 aa). 140–202 contacts ATP; the sequence is MTSLGKDVVV…EEKLVGVEFT (63 aa). Positions 282, 294, and 296 each coordinate Mg(2+). Mn(2+) contacts are provided by Q282, E294, and N296.

Belongs to the GARS family. The cofactor is Mg(2+). Requires Mn(2+) as cofactor.

It catalyses the reaction 5-phospho-beta-D-ribosylamine + glycine + ATP = N(1)-(5-phospho-beta-D-ribosyl)glycinamide + ADP + phosphate + H(+). It functions in the pathway purine metabolism; IMP biosynthesis via de novo pathway; N(1)-(5-phospho-D-ribosyl)glycinamide from 5-phospho-alpha-D-ribose 1-diphosphate: step 2/2. The chain is Phosphoribosylamine--glycine ligase from Methanococcus maripaludis (strain DSM 14266 / JCM 13030 / NBRC 101832 / S2 / LL).